A 355-amino-acid chain; its full sequence is MTKLENDTFIRALLRQPVDYTPVWMMRQAGRYLPEYNQTRARAGSFLSLCKNPDFATEVTLQPLARFSLDAAILFSDILTIPDAMGLGLYFADGEGPRFERPLREEREIRSLIVPDPDTHLRYVTDAVRQIRTALNNRVPLIGFSGSPFTLACYMVEGAGSSEFRQIKTMLYARPDLLHHILGVTAQAVTAYLNAQIEAGAQAVMIFDSWGGALSHAAYQEFSLRYMNQILDGLKREHNGDRIPNILFTKGGGLWLESIMASGCDAIGLDWTIDIGEARRRTQDKVALQGNLDPAVLFSSPEVIAAEAGKILASYGHGHGHVFNLGHGISQFTPPENALALIEAVHAQSVRYHTD.

Residues 27 to 31, Phe46, Asp77, Tyr154, Ser209, and His327 each bind substrate; that span reads RQAGR.

It belongs to the uroporphyrinogen decarboxylase family. As to quaternary structure, homodimer.

It is found in the cytoplasm. It carries out the reaction uroporphyrinogen III + 4 H(+) = coproporphyrinogen III + 4 CO2. Its pathway is porphyrin-containing compound metabolism; protoporphyrin-IX biosynthesis; coproporphyrinogen-III from 5-aminolevulinate: step 4/4. In terms of biological role, catalyzes the decarboxylation of four acetate groups of uroporphyrinogen-III to yield coproporphyrinogen-III. The sequence is that of Uroporphyrinogen decarboxylase from Nitrosomonas europaea (strain ATCC 19718 / CIP 103999 / KCTC 2705 / NBRC 14298).